The following is a 214-amino-acid chain: Charged multivesicular body protein 2b (214 aa).

Residues 25–55 are a coiled coil; that stretch reads QRTITRDRAALEKQERQLELEIKKMAKTGNK. Residues 179–201 are disordered; that stretch reads AKAPSAARGLPSASTSKASTISD. The span at 190–199 shows a compositional bias: polar residues; sequence SASTSKASTI. The short motif at 202-212 is the MIT-interacting motif element; that stretch reads EEIERQLKALG.

It belongs to the SNF7 family. In terms of assembly, probable core component of the endosomal sorting required for transport complex III (ESCRT-III). ESCRT-III components are thought to multimerize to form a flat lattice on the perimeter membrane of the endosome.

Its subcellular location is the cytoplasm. The protein resides in the cytosol. It is found in the late endosome membrane. Probable core component of the endosomal sorting required for transport complex III (ESCRT-III) which is involved in multivesicular bodies (MVBs) formation and sorting of endosomal cargo proteins into MVBs. MVBs contain intraluminal vesicles (ILVs) that are generated by invagination and scission from the limiting membrane of the endosome and mostly are delivered to lysosomes enabling degradation of membrane proteins, such as stimulated growth factor receptors, lysosomal enzymes and lipids. The sequence is that of Charged multivesicular body protein 2b (CHMP2B) from Gallus gallus (Chicken).